We begin with the raw amino-acid sequence, 389 residues long: (S)-8-oxocitronellyl enol synthase CYC1 (389 aa).

Residues 34 to 36 (TGI), 62 to 63 (RR), 80 to 81 (DV), 104 to 105 (AW), and Gln138 each bind NADP(+). Residues Lys142 and Tyr174 contribute to the active site. Residues Lys142 and Tyr174 each coordinate substrate. NADP(+) contacts are provided by residues Tyr174, Val201, and 208–210 (SMM). A substrate-binding site is contributed by Ser350.

Belongs to the short-chain dehydrogenases/reductases (SDR) family. Highly divergent.

It carries out the reaction (S)-8-oxocitronellyl enol + NADP(+) = (6E)-8-oxogeranial + NADPH + H(+). The enzyme catalyses (S)-8-oxocitronellyl enol + NAD(+) = (6E)-8-oxogeranial + NADH + H(+). Functionally, iridoid synthase that catalyzes the first step in generation of the iridoid ring scaffold using the linear monoterpene (6E)-8-oxogeranial as substrate. Iridoids comprise a large family of distinctive bicyclic monoterpenes that possess a wide range of pharmacological activities, including anticancer, anti-inflammatory, antifungal and antibacterial activities. The polypeptide is (S)-8-oxocitronellyl enol synthase CYC1 (Camptotheca acuminata (Happy tree)).